Here is a 483-residue protein sequence, read N- to C-terminus: Glutamyl-tRNA(Gln) amidotransferase subunit A (483 aa).

Residues K75 and S150 each act as charge relay system in the active site. S174 acts as the Acyl-ester intermediate in catalysis.

The protein belongs to the amidase family. GatA subfamily. As to quaternary structure, heterotrimer of A, B and C subunits.

It carries out the reaction L-glutamyl-tRNA(Gln) + L-glutamine + ATP + H2O = L-glutaminyl-tRNA(Gln) + L-glutamate + ADP + phosphate + H(+). In terms of biological role, allows the formation of correctly charged Gln-tRNA(Gln) through the transamidation of misacylated Glu-tRNA(Gln) in organisms which lack glutaminyl-tRNA synthetase. The reaction takes place in the presence of glutamine and ATP through an activated gamma-phospho-Glu-tRNA(Gln). This is Glutamyl-tRNA(Gln) amidotransferase subunit A from Microcystis aeruginosa (strain NIES-843 / IAM M-2473).